A 331-amino-acid chain; its full sequence is RNA/RNP complex-1-interacting phosphatase (331 aa).

Residues 61 to 208 (FEKHLAPEEC…LRNGPIRKNW (148 aa)) form the Tyrosine-protein phosphatase domain. The Phosphocysteine intermediate role is filled by Cys152. 153–158 (THGVNR) is a substrate binding site. The active-site Proton donor/acceptor is Arg158.

It belongs to the protein-tyrosine phosphatase family. Non-receptor class dual specificity subfamily. As to quaternary structure, monomer. May interact with SFRS7 and SFRS9/SRP30C.

It localises to the nucleus. Its subcellular location is the nucleus speckle. Functionally, possesses RNA 5'-triphosphatase and diphosphatase activities, but displays a poor protein-tyrosine phosphatase activity. In addition, has phosphatase activity with ATP, ADP and O-methylfluorescein phosphate (in vitro). Binds to RNA. May participate in nuclear mRNA metabolism. This Bos taurus (Bovine) protein is RNA/RNP complex-1-interacting phosphatase (DUSP11).